We begin with the raw amino-acid sequence, 356 residues long: Probable dual-specificity RNA methyltransferase RlmN (356 aa).

The Proton acceptor role is filled by Glu97. The Radical SAM core domain maps to Tyr103–Asp333. A disulfide bridge connects residues Cys110 and Cys338. The [4Fe-4S] cluster site is built by Cys117, Cys121, and Cys124. S-adenosyl-L-methionine contacts are provided by residues Gly164–Glu165, Ser196, Ser219–His221, and Asn295. Cys338 (S-methylcysteine intermediate) is an active-site residue.

This sequence belongs to the radical SAM superfamily. RlmN family. The cofactor is [4Fe-4S] cluster.

Its subcellular location is the cytoplasm. It carries out the reaction adenosine(2503) in 23S rRNA + 2 reduced [2Fe-2S]-[ferredoxin] + 2 S-adenosyl-L-methionine = 2-methyladenosine(2503) in 23S rRNA + 5'-deoxyadenosine + L-methionine + 2 oxidized [2Fe-2S]-[ferredoxin] + S-adenosyl-L-homocysteine. It catalyses the reaction adenosine(37) in tRNA + 2 reduced [2Fe-2S]-[ferredoxin] + 2 S-adenosyl-L-methionine = 2-methyladenosine(37) in tRNA + 5'-deoxyadenosine + L-methionine + 2 oxidized [2Fe-2S]-[ferredoxin] + S-adenosyl-L-homocysteine. Functionally, specifically methylates position 2 of adenine 2503 in 23S rRNA and position 2 of adenine 37 in tRNAs. The sequence is that of Probable dual-specificity RNA methyltransferase RlmN from Lachnoclostridium phytofermentans (strain ATCC 700394 / DSM 18823 / ISDg) (Clostridium phytofermentans).